We begin with the raw amino-acid sequence, 521 residues long: Sphingolipid C9-methyltransferase 2 (521 aa).

2 helical membrane passes run 60–80 and 85–105; these read VLISILTIVPWWLSWKVGGGF and FFAIIVDLPMLAAWWLTISAI. S-adenosyl-L-methionine-binding positions include 225-226, 262-270, 288-293, and 318-319; these read YT, MLDIGCGWG, TLGRNQ, and YR.

This sequence belongs to the CFA/CMAS family.

Its subcellular location is the membrane. The catalysed reaction is a (4E,8E)-4-sphinga-4,8-dienine ceramide + S-adenosyl-L-methionine = a 9-methyl-(4E,8E)-sphinga-4,8-dienine ceramide + S-adenosyl-L-homocysteine + H(+). The protein operates within lipid metabolism; sphingolipid metabolism. Its function is as follows. Catalyzes methylation of the sphingoid base component of glucosylceramides (GluCers) at the C9-position. Sphingolipid C9-methylation requires 4,8-desaturated ceramides as substrates. Glucosylceramides play important roles in growth, differentiation and pathogenicity. The methyl group at the C9-position distinguishes fungal glucosylceramides from those of plants and animals and may thus play a role in host-pathogen interactions enabling the host to recognize the fungal attack and initiate specific defense responses. However, C-9 methylation of GlcCers is not essential for the sensitivity of F.graminearum to plant defensins MsDef1 and RsAFP2. The sequence is that of Sphingolipid C9-methyltransferase 2 from Gibberella zeae (strain ATCC MYA-4620 / CBS 123657 / FGSC 9075 / NRRL 31084 / PH-1) (Wheat head blight fungus).